A 388-amino-acid polypeptide reads, in one-letter code: Galactokinase (388 aa).

33 to 36 (EHTD) is a binding site for substrate. ATP contacts are provided by residues serine 67 and 124–130 (GSGLSSS). The Mg(2+) site is built by serine 130 and glutamate 162. Aspartate 174 (proton acceptor) is an active-site residue. A substrate-binding site is contributed by tyrosine 224.

Belongs to the GHMP kinase family. GalK subfamily.

It is found in the cytoplasm. The catalysed reaction is alpha-D-galactose + ATP = alpha-D-galactose 1-phosphate + ADP + H(+). Its pathway is carbohydrate metabolism; galactose metabolism. In terms of biological role, catalyzes the transfer of the gamma-phosphate of ATP to D-galactose to form alpha-D-galactose-1-phosphate (Gal-1-P). This Streptococcus thermophilus (strain ATCC BAA-491 / LMD-9) protein is Galactokinase.